A 335-amino-acid chain; its full sequence is METLIELSKKMPKTELHLHIEGTFEPEQMFAIAQRNQVELKYSTVDALKAAYQFTNLQDFLDLYYQGMSVLLHEADFYDLTMAYLEKVHSENVVHVEIFFDPQGHLSRGVGFDVQIQGIYKALQDAEKKWGMTSKLIMSFLRHLSEESAFETLELAKPHLKWIDGIGLDSSEVGHPPEKFLRVFEACKNLGLKVTAHAGEEGPPDYVWQAIEQIGVDRIDHGNRALEDNKLIEAIKQRNLTLTVCPLSNLKLCVVNDMKNHPIKNMLALGLNATVNSDDPAYFGGYMNDNYASLINGTRISKEELFQLAKNGITGSWMEDHLKELHLKQLHALFA.

H17, H19, and H197 together coordinate Zn(2+). E200 acts as the Proton donor in catalysis. D278 is a binding site for Zn(2+). D279 contributes to the substrate binding site.

It belongs to the metallo-dependent hydrolases superfamily. Adenosine and AMP deaminases family. Adenine deaminase type 2 subfamily. Zn(2+) is required as a cofactor.

It carries out the reaction adenine + H2O + H(+) = hypoxanthine + NH4(+). In terms of biological role, catalyzes the hydrolytic deamination of adenine to hypoxanthine. Plays an important role in the purine salvage pathway and in nitrogen catabolism. This chain is Adenine deaminase, found in Marinomonas sp. (strain MWYL1).